Consider the following 123-residue polypeptide: UPF0102 protein VFMJ11_2324 (123 aa).

This sequence belongs to the UPF0102 family.

The polypeptide is UPF0102 protein VFMJ11_2324 (Aliivibrio fischeri (strain MJ11) (Vibrio fischeri)).